We begin with the raw amino-acid sequence, 404 residues long: Probable tRNA sulfurtransferase (404 aa).

The region spanning 61-166 (EAVSERLKDV…SGYSYIMCDE (106 aa)) is the THUMP domain. ATP contacts are provided by residues 184–185 (LL), 209–210 (HF), arginine 266, glycine 288, and glutamine 297.

It belongs to the ThiI family.

Its subcellular location is the cytoplasm. It catalyses the reaction [ThiI sulfur-carrier protein]-S-sulfanyl-L-cysteine + a uridine in tRNA + 2 reduced [2Fe-2S]-[ferredoxin] + ATP + H(+) = [ThiI sulfur-carrier protein]-L-cysteine + a 4-thiouridine in tRNA + 2 oxidized [2Fe-2S]-[ferredoxin] + AMP + diphosphate. It carries out the reaction [ThiS sulfur-carrier protein]-C-terminal Gly-Gly-AMP + S-sulfanyl-L-cysteinyl-[cysteine desulfurase] + AH2 = [ThiS sulfur-carrier protein]-C-terminal-Gly-aminoethanethioate + L-cysteinyl-[cysteine desulfurase] + A + AMP + 2 H(+). It participates in cofactor biosynthesis; thiamine diphosphate biosynthesis. Functionally, catalyzes the ATP-dependent transfer of a sulfur to tRNA to produce 4-thiouridine in position 8 of tRNAs, which functions as a near-UV photosensor. Also catalyzes the transfer of sulfur to the sulfur carrier protein ThiS, forming ThiS-thiocarboxylate. This is a step in the synthesis of thiazole, in the thiamine biosynthesis pathway. The sulfur is donated as persulfide by IscS. The chain is Probable tRNA sulfurtransferase from Bacillus cereus (strain ATCC 14579 / DSM 31 / CCUG 7414 / JCM 2152 / NBRC 15305 / NCIMB 9373 / NCTC 2599 / NRRL B-3711).